The chain runs to 149 residues: Large ribosomal subunit protein uL15 (149 aa).

The segment at 21 to 54 (RGSASGLGCTSGKGNKGQNARSGGGVRPGFEGGQ) is disordered. 2 stretches are compositionally biased toward gly residues: residues 23 to 35 (SASGLGCTSGKGN) and 42 to 52 (SGGGVRPGFEG).

It belongs to the universal ribosomal protein uL15 family. In terms of assembly, part of the 50S ribosomal subunit.

In terms of biological role, binds to the 23S rRNA. In Lawsonia intracellularis (strain PHE/MN1-00), this protein is Large ribosomal subunit protein uL15.